The primary structure comprises 150 residues: Protein A151R (150 aa).

This sequence belongs to the asfivirus A151R family. As to quaternary structure, monomer. Homodimer. Interacts with protein B119L. Interacts with membrane protein E248R. It depends on Zn(2+) as a cofactor.

Functionally, may participate in a redox cascade for the formation of disulfide bonds in viral proteins. This is Protein A151R from African swine fever virus (isolate Tick/Malawi/Lil 20-1/1983) (ASFV).